A 391-amino-acid chain; its full sequence is NADH-quinone oxidoreductase subunit D (391 aa).

It belongs to the complex I 49 kDa subunit family. In terms of assembly, NDH-1 is composed of 14 different subunits. Subunits NuoB, C, D, E, F, and G constitute the peripheral sector of the complex.

The protein resides in the cell inner membrane. The enzyme catalyses a quinone + NADH + 5 H(+)(in) = a quinol + NAD(+) + 4 H(+)(out). Its function is as follows. NDH-1 shuttles electrons from NADH, via FMN and iron-sulfur (Fe-S) centers, to quinones in the respiratory chain. The immediate electron acceptor for the enzyme in this species is believed to be ubiquinone. Couples the redox reaction to proton translocation (for every two electrons transferred, four hydrogen ions are translocated across the cytoplasmic membrane), and thus conserves the redox energy in a proton gradient. This is NADH-quinone oxidoreductase subunit D from Pelagibacter ubique (strain HTCC1062).